The sequence spans 306 residues: BRCA2 and CDKN1A-interacting protein (306 aa).

Over residues 1 to 10 (MASRPKRRAV) the composition is skewed to basic residues. The tract at residues 1–45 (MASRPKRRAVSRVPPALGDEEEEDEVEEQDEDDSDEEEDEEDEVV) is disordered. Residues 18–45 (GDEEEEDEVEEQDEDDSDEEEDEEDEVV) show a composition bias toward acidic residues. A phosphoserine mark is found at serine 34 and serine 104. The interval 51–159 (IEFEAYSISD…EKSMVEQLDR (109 aa)) is interaction with BRCA2. The tract at residues 153 to 251 (MVEQLDRLFN…NAEEEFFYEK (99 aa)) is interaction with CDKN1A. Position 273 is a phosphoserine (serine 273).

The protein belongs to the BCP1 family. In terms of assembly, interacts with BRCA2, CDKN1A and MTDH/LYRIC. Interacts with DCTN1/p150-glued and ACTR1A/ARP1. Interacts with alpha-, beta- and gamma-tubulins. Interacts with TENT5C; the interaction has no effect on TENT5C poly(A) polymerase function.

It is found in the nucleus. The protein localises to the cytoplasm. Its subcellular location is the cytoskeleton. It localises to the microtubule organizing center. The protein resides in the centrosome. It is found in the centriole. The protein localises to the spindle pole. Functionally, during interphase, required for microtubule organizing and anchoring activities. During mitosis, required for the organization and stabilization of the spindle pole. May promote cell cycle arrest by enhancing the inhibition of CDK2 activity by CDKN1A. May be required for repair of DNA damage by homologous recombination in conjunction with BRCA2. May not be involved in non-homologous end joining (NHEJ). This chain is BRCA2 and CDKN1A-interacting protein (BCCIP), found in Bos taurus (Bovine).